A 789-amino-acid polypeptide reads, in one-letter code: uncharacterized protein (789 aa).

5 disordered regions span residues 107 to 326 (YQQD…NNNN), 426 to 491 (MLKS…NNNN), 523 to 625 (SVNF…ISNN), 666 to 751 (THTF…KGNN), and 765 to 789 (PTRF…YNQH). Acidic residues predominate over residues 113–123 (NNTDDEQEQEQ). 4 stretches are compositionally biased toward low complexity: residues 124 to 141 (EQQQ…TPIK), 151 to 194 (TSQT…ITPI), 201 to 213 (SIST…LRSS), and 225 to 270 (TSST…THNS). A compositionally biased stretch (acidic residues) spans 274–290 (IDDDDGDNNDEINDEND). Composition is skewed to low complexity over residues 291-326 (INSN…NNNN) and 429-491 (SNNS…NNNN). Residues 523–549 (SVNFDRNQNQKSPFLNNTSMPNINFNE) are compositionally biased toward polar residues. Composition is skewed to low complexity over residues 550–581 (QSQQ…SINY), 602–617 (TSGS…NNSK), 696–722 (HIMN…SGSN), and 766–789 (TRFN…YNQH).

This is an uncharacterized protein from Dictyostelium discoideum (Social amoeba).